A 594-amino-acid chain; its full sequence is Aspartate--tRNA(Asp/Asn) ligase (594 aa).

Residue glutamate 175 participates in L-aspartate binding. Positions 199-202 are aspartate; that stretch reads QQFK. L-aspartate contacts are provided by arginine 221 and histidine 455. Position 221–223 (221–223) interacts with ATP; the sequence is RDE. An ATP-binding site is contributed by glutamate 489. Arginine 496 serves as a coordination point for L-aspartate. An ATP-binding site is contributed by 541–544; it reads GIDR.

Belongs to the class-II aminoacyl-tRNA synthetase family. Type 1 subfamily. As to quaternary structure, homodimer.

It is found in the cytoplasm. It catalyses the reaction tRNA(Asx) + L-aspartate + ATP = L-aspartyl-tRNA(Asx) + AMP + diphosphate. In terms of biological role, aspartyl-tRNA synthetase with relaxed tRNA specificity since it is able to aspartylate not only its cognate tRNA(Asp) but also tRNA(Asn). Reaction proceeds in two steps: L-aspartate is first activated by ATP to form Asp-AMP and then transferred to the acceptor end of tRNA(Asp/Asn). The polypeptide is Aspartate--tRNA(Asp/Asn) ligase (Pelagibacter ubique (strain HTCC1062)).